The sequence spans 660 residues: tRNA 5-methylaminomethyl-2-thiouridine biosynthesis bifunctional protein MnmC (660 aa).

The tract at residues 1-242 is tRNA (mnm(5)s(2)U34)-methyltransferase; the sequence is MTDRIVPATL…KRAMLVGEFA (242 aa). The tract at residues 266–660 is FAD-dependent cmnm(5)s(2)U34 oxidoreductase; the sequence is IGAGLAGCAV…VRALRHGRVA (395 aa).

It in the N-terminal section; belongs to the methyltransferase superfamily. tRNA (mnm(5)s(2)U34)-methyltransferase family. This sequence in the C-terminal section; belongs to the DAO family. FAD serves as cofactor.

It is found in the cytoplasm. It catalyses the reaction 5-aminomethyl-2-thiouridine(34) in tRNA + S-adenosyl-L-methionine = 5-methylaminomethyl-2-thiouridine(34) in tRNA + S-adenosyl-L-homocysteine + H(+). Its function is as follows. Catalyzes the last two steps in the biosynthesis of 5-methylaminomethyl-2-thiouridine (mnm(5)s(2)U) at the wobble position (U34) in tRNA. Catalyzes the FAD-dependent demodification of cmnm(5)s(2)U34 to nm(5)s(2)U34, followed by the transfer of a methyl group from S-adenosyl-L-methionine to nm(5)s(2)U34, to form mnm(5)s(2)U34. This is tRNA 5-methylaminomethyl-2-thiouridine biosynthesis bifunctional protein MnmC from Burkholderia mallei (strain NCTC 10247).